The sequence spans 459 residues: Aluminum-activated malate transporter 1 (459 aa).

The Extracellular portion of the chain corresponds to 1 to 52; it reads MDIDHGRESDGEMVGTIASCGLLLHSLLAGLGRRAAGFARKVGGAAREDPRR. The next 2 membrane-spanning stretches (helical) occupy residues 53–73 and 74–94; these read VAHS…YFVT and PLFN…VVVM. At 95 to 108 the chain is on the extracellular side; sequence EYTVGATLSKGLNR. A helical transmembrane segment spans residues 109–129; it reads ALATLVAGCIAVGAHQLAELA. At 130–137 the chain is on the cytoplasmic side; that stretch reads ERCGDQGE. Residues 138–158 form a helical membrane-spanning segment; the sequence is PIVLTVLVFFVASAATFLRFI. The Extracellular segment spans residues 159 to 160; it reads PE. A helical transmembrane segment spans residues 161-181; it reads IKAKYDYGVTIFILTFGLVAV. The Cytoplasmic portion of the chain corresponds to 182–199; it reads SSYRVEELIQLAHQRFYT. A helical membrane pass occupies residues 200–220; sequence IAVGVFICLCTTVFLFPVWAG. The Extracellular portion of the chain corresponds to 221 to 459; it reads EDVHKLASGN…DEPLPDVVIL (239 aa).

This sequence belongs to the aromatic acid exporter (TC 2.A.85) family. In terms of tissue distribution, detected in root tips.

Its subcellular location is the cell membrane. Activated by external aluminum. The enhancement of malate transport is not due to alteration in the selectivity properties but is due to an increased anion permeability. Its function is as follows. Malate transporter critical for aluminum tolerance. Permeable to chloride, nitrate, sulfate and malate. In Triticum aestivum (Wheat), this protein is Aluminum-activated malate transporter 1 (ALMT1).